Reading from the N-terminus, the 312-residue chain is MYSMLETEIKTPQPTRAARGEPARAATAKVGGAAAADGCRSDQDRVKRPMNAFMVWSRGQRRKMAQENPKMHNSEISKRLGADWKLLSDAEKRPFIDEAKRLRAVHMKEYPDYKYRPRRKTKTLLKKDKYSLPGNLWPPGSAGAAAVGVGQRIDTYAHMNGWTNGAYSLMQDQLGYGQHPGMNSPQLQQMHRYDMPGLQYSPMMSTAQTYMNAGLHLQHVPRPYGQQPSTAMSLGSMGSVVKSEPSSAPPAITSHSQRACLGELRDMISMYLGPGGDATHPSALQGSRLHSVHQHYQSAGTRVNGTVPLTHI.

The interval 1–23 is disordered; that stretch reads MYSMLETEIKTPQPTRAARGEPA. Residues 46–114 constitute a DNA-binding region (HMG box); the sequence is VKRPMNAFMV…VHMKEYPDYK (69 aa). The interval 229-254 is disordered; that stretch reads STAMSLGSMGSVVKSEPSSAPPAITS. The 9aaTAD motif lies at 263 to 274; it reads ELRDMISMYLGP.

As to expression, first expressed in the embryonic neural plate shortly before closure and expression continues in the neural tube. From stage 16 onwards, expressed throughout the CNS including the brain, with expression predominant in the undifferentiated cells of the neural epithelium. Also expressed at a low level in the retina and the gut epithelium.

The protein resides in the nucleus. Functionally, transcription factor that may function as a switch in neuronal development. Keeps neural cells undifferentiated by counteracting the activity of proneural proteins and suppresses neuronal differentiation. The sequence is that of Transcription factor SOX-3 (SOX3) from Gallus gallus (Chicken).